Here is a 186-residue protein sequence, read N- to C-terminus: MAAEDPPVSGVSGRYATALFELARDEKSVDAVKADLDKFNALLDESADLKRLVRSPVFGADVQLKALNAVLDKAGIAGVAANVLRVLTANRRLFAVADVIRAFNALVAKYKGEATADVTVAEPLSDKNLDALKASLKTVTGKDVALNVKVDPAIIGGLVVKLGSRMIDSSLRTKLNSIKHAMKEAG.

Belongs to the ATPase delta chain family. F-type ATPases have 2 components, F(1) - the catalytic core - and F(0) - the membrane proton channel. F(1) has five subunits: alpha(3), beta(3), gamma(1), delta(1), epsilon(1). CF(0) has four main subunits: a(1), b(1), b'(1) and c(10-14). The alpha and beta chains form an alternating ring which encloses part of the gamma chain. F(1) is attached to F(0) by a central stalk formed by the gamma and epsilon chains, while a peripheral stalk is formed by the delta, b and b' chains.

It localises to the cell inner membrane. F(1)F(0) ATP synthase produces ATP from ADP in the presence of a proton or sodium gradient. F-type ATPases consist of two structural domains, F(1) containing the extramembraneous catalytic core and F(0) containing the membrane proton channel, linked together by a central stalk and a peripheral stalk. During catalysis, ATP synthesis in the catalytic domain of F(1) is coupled via a rotary mechanism of the central stalk subunits to proton translocation. Functionally, this protein is part of the stalk that links CF(0) to CF(1). It either transmits conformational changes from CF(0) to CF(1) or is implicated in proton conduction. The polypeptide is ATP synthase subunit delta (Bradyrhizobium sp. (strain BTAi1 / ATCC BAA-1182)).